The primary structure comprises 101 residues: MKPNFSKGLLPAVVIEEGTKEVLMLAYMNEEAYEKTLKTKRTWFYSRSRRSLWNKGETSGHVQHVQSLYLDCDQDAIVVVVKQVGPACHTGEKTCFHYKII.

Mg(2+) is bound at residue Asp71. Cys72 contributes to the Zn(2+) binding site. Mg(2+) contacts are provided by Asp73 and Asp75. The Zn(2+) site is built by Cys88 and Cys95.

The protein belongs to the PRA-CH family. As to quaternary structure, homodimer. Mg(2+) serves as cofactor. It depends on Zn(2+) as a cofactor.

The protein localises to the cytoplasm. It catalyses the reaction 1-(5-phospho-beta-D-ribosyl)-5'-AMP + H2O = 1-(5-phospho-beta-D-ribosyl)-5-[(5-phospho-beta-D-ribosylamino)methylideneamino]imidazole-4-carboxamide. Its pathway is amino-acid biosynthesis; L-histidine biosynthesis; L-histidine from 5-phospho-alpha-D-ribose 1-diphosphate: step 3/9. Functionally, catalyzes the hydrolysis of the adenine ring of phosphoribosyl-AMP. The chain is Phosphoribosyl-AMP cyclohydrolase from Bacillus cereus (strain ZK / E33L).